The chain runs to 53 residues: uncharacterized protein (53 aa).

This is an uncharacterized protein from Haemophilus influenzae (strain ATCC 51907 / DSM 11121 / KW20 / Rd).